Reading from the N-terminus, the 481-residue chain is Cysteine--tRNA ligase (481 aa).

Cys29 serves as a coordination point for Zn(2+). Positions 31 to 41 (PTVYDYSHLGH) match the 'HIGH' region motif. Residues Cys210, His235, and Glu239 each contribute to the Zn(2+) site. The short motif at 272–276 (KMSKS) is the 'KMSKS' region element. Lys275 lines the ATP pocket.

Belongs to the class-I aminoacyl-tRNA synthetase family. Monomer. Zn(2+) serves as cofactor.

The protein localises to the cytoplasm. It catalyses the reaction tRNA(Cys) + L-cysteine + ATP = L-cysteinyl-tRNA(Cys) + AMP + diphosphate. This chain is Cysteine--tRNA ligase, found in Anaeromyxobacter sp. (strain K).